Reading from the N-terminus, the 133-residue chain is Ubiquitin-like FUBI-ribosomal protein eS30 fusion protein (133 aa).

The interval 84–110 (GKVRGQTPKVAKQEKKKKKTGRAKRRM) is disordered. Basic residues predominate over residues 97-110 (EKKKKKTGRAKRRM). Residue K125 is modified to N6-succinyllysine.

This sequence in the N-terminal section; belongs to the ubiquitin family. It in the C-terminal section; belongs to the eukaryotic ribosomal protein eS30 family. In terms of assembly, component of the 40S subunit of the ribosome. Post-translationally, FUBI is cleaved from ribosomal protein S30 by the deubiquitinase USP36 before the assembly of ribosomal protein S30 into pre-40S ribosomal particles. FUBI removal from ribosomal protein S30 is a crucial event for the final maturation of pre-40S particles.

It is found in the nucleus. The protein localises to the cytoplasm. Functionally, may have pro-apoptotic activity. Component of the 40S subunit of the ribosome. Contributes to the assembly and function of 40S ribosomal subunits. The sequence is that of Ubiquitin-like FUBI-ribosomal protein eS30 fusion protein (Fau) from Mus musculus (Mouse).